The following is a 515-amino-acid chain: MMSYPLYKLFLKGKLCDVEIVAEGKSIRAHRLVLSAYSKYFYNLFNGNFLEKNVDVIDLEADYKTVFDVIYYMYTESIELHKGNTESIFSLVHYLQIKPLIKKCIYEFNSIVNEENCIRLFKFAELYDLSELKRRARWLMPSLVMNEKDRLREMSLDDLSLMLVQIRNTVDRSIALSAITEWIQTNVRERRRHAVHLATCLGDVPGTASSRAVYKHYMSELRIRVTEFQPAYHNCVVYLGGSMKGRVTALDPETGKSVVLSTWWPEERWECFTAVCMNDVLYFAGGKLDAVPTRQVLSYDVKANTWSRQPNLSEFRSDAAAYAIGGCIYIIGGYDANDRPTNTTLYWRPGYDRWYRGPTLVEAVAETSAVCYKNEIWVLGGRIHRDGVPDVTDVVQKLSGGTWTKVNELSVPKASVTAIVYKERLYCVGGLVDRYAPTNEVIRYRDDTNEWEYVGSTKIERGGAVGCVYNDELYVFGGTDTFTSERYNGVIWKRANDVSCHFATMNAAYATYLEL.

The region spanning 16–82 (CDVEIVAEGK…MYTESIELHK (67 aa)) is the BTB domain. Kelch repeat units lie at residues 280-326 (VLYF…AIGG), 328-374 (IYII…CYKN), 376-423 (IWVL…VYKE), 424-471 (RLYC…VYND), and 473-512 (LYVF…YATY).

Belongs to the poxviruses Kelch family.

The chain is Kelch repeat protein M-T8 from Oryctolagus cuniculus (Rabbit).